Here is a 131-residue protein sequence, read N- to C-terminus: Holo-[acyl-carrier-protein] synthase (131 aa).

Aspartate 8 and glutamate 63 together coordinate Mg(2+).

This sequence belongs to the P-Pant transferase superfamily. AcpS family. Mg(2+) is required as a cofactor.

The protein localises to the cytoplasm. It catalyses the reaction apo-[ACP] + CoA = holo-[ACP] + adenosine 3',5'-bisphosphate + H(+). In terms of biological role, transfers the 4'-phosphopantetheine moiety from coenzyme A to a Ser of acyl-carrier-protein. In Shewanella pealeana (strain ATCC 700345 / ANG-SQ1), this protein is Holo-[acyl-carrier-protein] synthase.